We begin with the raw amino-acid sequence, 430 residues long: Cytochrome c biogenesis protein CcsB (430 aa).

The next 3 helical transmembrane spans lie at 14 to 34 (LRLA…GTIL), 72 to 92 (SVWF…CSWR), and 162 to 182 (VGPL…AWGA).

Belongs to the Ccs1/CcsB family. In terms of assembly, may interact with CcsA.

The protein resides in the cellular thylakoid membrane. Functionally, required during biogenesis of c-type cytochromes (cytochrome c6 and cytochrome f) at the step of heme attachment. The chain is Cytochrome c biogenesis protein CcsB from Synechococcus sp. (strain WH7803).